A 218-amino-acid polypeptide reads, in one-letter code: Adenylate kinase (218 aa).

Glycine 10 to threonine 15 serves as a coordination point for ATP. An NMP region spans residues serine 30 to valine 59. AMP is bound by residues threonine 31, arginine 36, glycine 57–valine 59, glycine 85–arginine 88, and glutamine 92. The LID stretch occupies residues glycine 122–aspartate 159. Residues arginine 123 and threonine 132–tyrosine 133 contribute to the ATP site. 2 residues coordinate AMP: arginine 156 and arginine 167. Glycine 203 contacts ATP.

This sequence belongs to the adenylate kinase family. Monomer.

It is found in the cytoplasm. The enzyme catalyses AMP + ATP = 2 ADP. Its pathway is purine metabolism; AMP biosynthesis via salvage pathway; AMP from ADP: step 1/1. Catalyzes the reversible transfer of the terminal phosphate group between ATP and AMP. Plays an important role in cellular energy homeostasis and in adenine nucleotide metabolism. The sequence is that of Adenylate kinase from Albidiferax ferrireducens (strain ATCC BAA-621 / DSM 15236 / T118) (Rhodoferax ferrireducens).